The primary structure comprises 158 residues: Cyclic pyranopterin monophosphate synthase (158 aa).

Residues 74 to 76 (MCH) and 112 to 113 (ME) contribute to the substrate site. Residue D127 is part of the active site.

It belongs to the MoaC family. In terms of assembly, homohexamer; trimer of dimers.

The enzyme catalyses (8S)-3',8-cyclo-7,8-dihydroguanosine 5'-triphosphate = cyclic pyranopterin phosphate + diphosphate. The protein operates within cofactor biosynthesis; molybdopterin biosynthesis. Its function is as follows. Catalyzes the conversion of (8S)-3',8-cyclo-7,8-dihydroguanosine 5'-triphosphate to cyclic pyranopterin monophosphate (cPMP). This is Cyclic pyranopterin monophosphate synthase from Helicobacter pylori (strain Shi470).